A 277-amino-acid chain; its full sequence is 4-hydroxybenzoate octaprenyltransferase (277 aa).

The next 8 membrane-spanning stretches (helical) occupy residues 24–44 (FAAA…LGVI), 81–101 (VEAK…DLSL), 102–122 (NQYA…YPFM), 129–149 (PQVV…GAVI), 152–172 (LPLT…AYDT), 201–221 (IIAL…WLSE), 224–244 (IGYF…CWLT), and 255–275 (AFLN…VGIY).

Belongs to the UbiA prenyltransferase family. Mg(2+) is required as a cofactor.

It is found in the cell inner membrane. It catalyses the reaction all-trans-octaprenyl diphosphate + 4-hydroxybenzoate = 4-hydroxy-3-(all-trans-octaprenyl)benzoate + diphosphate. It functions in the pathway cofactor biosynthesis; ubiquinone biosynthesis. In terms of biological role, catalyzes the prenylation of para-hydroxybenzoate (PHB) with an all-trans polyprenyl group. Mediates the second step in the final reaction sequence of ubiquinone-8 (UQ-8) biosynthesis, which is the condensation of the polyisoprenoid side chain with PHB, generating the first membrane-bound Q intermediate 3-octaprenyl-4-hydroxybenzoate. The chain is 4-hydroxybenzoate octaprenyltransferase from Haemophilus ducreyi (strain 35000HP / ATCC 700724).